A 336-amino-acid chain; its full sequence is Large ribosomal subunit protein mL39 (336 aa).

Residues 60–126 (EKIEVKHVGK…TKSCEIKFLT (67 aa)) enclose the TGS domain. Lys123 carries the post-translational modification N6-acetyllysine.

It belongs to the mitochondrion-specific ribosomal protein mL39 family. In terms of assembly, component of the mitochondrial ribosome large subunit (39S) which comprises a 16S rRNA and about 50 distinct proteins.

The protein resides in the mitochondrion. This Mus musculus (Mouse) protein is Large ribosomal subunit protein mL39 (Mrpl39).